We begin with the raw amino-acid sequence, 441 residues long: Interferon-related developmental regulator 2 (441 aa).

Residues 1–15 are compositionally biased toward basic residues; it reads MPRARKGNTPRKGGQ. The segment at 1–72 is disordered; it reads MPRARKGNTP…TVDEQGPQED (72 aa). The span at 63–72 shows a compositional bias: acidic residues; that stretch reads TVDEQGPQED.

The protein belongs to the IFRD family. In terms of assembly, associates with ribosomes; promoting ribosome inactivation.

Its function is as follows. Ribosome-binding protein that acts as an inhibitor of mRNA translation by promoting ribosome inactivation. Associates with the P- and E-sites of the ribosome and inserts a C-terminal helix into the mRNA exit channel to preclude translation. This Oryctolagus cuniculus (Rabbit) protein is Interferon-related developmental regulator 2.